A 568-amino-acid chain; its full sequence is Sphingosine-1-phosphate lyase 1 (568 aa).

The Lumenal portion of the chain corresponds to 1–40 (MPGTDLLKLKDFEPYLEILESYSTKAKNYVNGYCTKYEPW). The chain crosses the membrane as a helical; Signal-anchor for type III membrane protein span at residues 41 to 61 (QLIAWSVLCTLLIVWVYELIF). The Cytoplasmic portion of the chain corresponds to 62–568 (QPESLWSRFK…NQMNGSPKPR (507 aa)). An N6-(pyridoxal phosphate)lysine; alternate modification is found at Lys-353. At Lys-353 the chain carries N6-acetyllysine; alternate. Residues Tyr-356 and Tyr-366 each carry the 3'-nitrotyrosine modification. At Ser-564 the chain carries Phosphoserine.

The protein belongs to the group II decarboxylase family. Sphingosine-1-phosphate lyase subfamily. It depends on pyridoxal 5'-phosphate as a cofactor. As to expression, highest levels are found in liver, small intestine and thymus, followed by kidney, lung, heart, spleen and brain (at protein level). Also detected in stomach, testis and skeletal muscle (at protein level).

Its subcellular location is the endoplasmic reticulum membrane. The catalysed reaction is sphinganine 1-phosphate = hexadecanal + phosphoethanolamine. The enzyme catalyses sphing-4-enine 1-phosphate = (2E)-hexadecenal + phosphoethanolamine. It functions in the pathway lipid metabolism; sphingolipid metabolism. In terms of biological role, cleaves phosphorylated sphingoid bases (PSBs), such as sphingosine-1-phosphate, into fatty aldehydes and phosphoethanolamine. Elevates stress-induced ceramide production and apoptosis. Required for global lipid homeostasis in liver and cholesterol homeostasis in fibroblasts. Involved in the regulation of pro-inflammatory response and neutrophil trafficking. Modulates neuronal autophagy via phosphoethanolamine production which regulates accumulation of aggregate-prone proteins such as APP. Seems to play a role in establishing neuronal contact sites and axonal maintenance. The polypeptide is Sphingosine-1-phosphate lyase 1 (Mus musculus (Mouse)).